We begin with the raw amino-acid sequence, 606 residues long: Ectonucleoside triphosphate diphosphohydrolase 7 (606 aa).

Residues 1–28 lie on the Cytoplasmic side of the membrane; sequence MARISFSYLCPASWYFTVPTVSPFLRQR. Residues 29–49 traverse the membrane as a helical segment; it reads VAFLGLFFIPCVLLLLLIMDL. Topologically, residues 50 to 548 are vesicular; sequence RHWATSLPRD…PAHGSWLRLS (499 aa). The Proton acceptor role is filled by Glu-217. Residue Asn-330 is glycosylated (N-linked (GlcNAc...) asparagine). The cysteines at positions 448 and 477 are disulfide-linked. A helical transmembrane segment spans residues 549 to 569; the sequence is FVYNHYLFFACTLVVLLAIVL. Over 570-606 the chain is Cytoplasmic; that stretch reads YLLRIHRIHRRQTRASAPLDLLWIEQVVPMIGVQVGP.

This sequence belongs to the GDA1/CD39 NTPase family. Requires Ca(2+) as cofactor. Mg(2+) serves as cofactor. Widely expressed. Expressed at high level in brain, kidney, liver, testis and small intestin. Weakly expressed in lung, thymus and heart.

Its subcellular location is the cytoplasmic vesicle membrane. The catalysed reaction is a ribonucleoside 5'-triphosphate + H2O = a ribonucleoside 5'-diphosphate + phosphate + H(+). It carries out the reaction UTP + H2O = UDP + phosphate + H(+). It catalyses the reaction GTP + H2O = GDP + phosphate + H(+). The enzyme catalyses CTP + H2O = CDP + phosphate + H(+). The catalysed reaction is ATP + H2O = ADP + phosphate + H(+). Functionally, catalyzes the hydrolysis of nucleoside triphosphates and diphosphates in a calcium- or magnesium-dependent manner. Preferentially hydrolyzes nucleoside 5'-triphosphates, with substrate preference for UTP &gt; GTP &gt; CTP. Hydrolyzes nucleoside diphosphates only to a minor extent. In contrast to its human ortholog is able to hydrolyze ATP. In the epithelial cells of small intestine controls luminal ATP levels, therefore regulating Th17-cell development. This Mus musculus (Mouse) protein is Ectonucleoside triphosphate diphosphohydrolase 7 (Entpd7).